A 55-amino-acid polypeptide reads, in one-letter code: ATP synthase small subunit 6, mitochondrial (55 aa).

Residues 1 to 15 (MRQFDPWPVFFRREW) constitute a mitochondrion transit peptide. A helical transmembrane segment spans residues 20–39 (PFLVGFAVTGAIITKMSLGF).

Belongs to the ATPase 6 subunit family.

It is found in the mitochondrion inner membrane. Its function is as follows. Mitochondrial membrane ATP synthase (F(1)F(0) ATP synthase or Complex V) produces ATP from ADP in the presence of a proton gradient across the membrane which is generated by electron transport complexes of the respiratory chain. F-type ATPases consist of two structural domains, F(1) - containing the extramembraneous catalytic core and F(0) - containing the membrane proton channel, linked together by a central stalk and a peripheral stalk. During catalysis, ATP synthesis in the catalytic domain of F(1) is coupled via a rotary mechanism of the central stalk subunits to proton translocation. Part of the complex F(0) domain. Confers tolerance to several abiotic stresses (e.g. salt, mannitol, drought, oxidative and cold stresses), probably by providing additional energy needed for cell homeostasis. In Solanum tuberosum (Potato), this protein is ATP synthase small subunit 6, mitochondrial.